An 845-amino-acid chain; its full sequence is Matrin-3 (845 aa).

At serine 2 the chain carries N-acetylserine. The residue at position 3 (lysine 3) is an N6-acetyllysine; alternate. A Glycyl lysine isopeptide (Lys-Gly) (interchain with G-Cter in SUMO2); alternate cross-link involves residue lysine 3. 7 positions are modified to phosphoserine: serine 4, serine 9, serine 14, serine 22, serine 41, serine 118, and serine 126. Residues lysine 132 and lysine 146 each participate in a glycyl lysine isopeptide (Lys-Gly) (interchain with G-Cter in SUMO2) cross-link. Disordered regions lie at residues 147–174 (RRRT…YRVP) and 187–213 (DSFD…ESGY). Threonine 150 carries the phosphothreonine modification. Phosphoserine is present on serine 157. Residue tyrosine 158 is modified to Phosphotyrosine. The segment covering 160–174 (RDGRSATREPPYRVP) has biased composition (basic and acidic residues). A phosphoserine mark is found at serine 164, serine 188, and serine 195. Over residues 201–213 (DYDHGSRSQESGY) the composition is skewed to basic and acidic residues. A Phosphotyrosine modification is found at tyrosine 202. Phosphoserine occurs at positions 206, 208, and 211. Tyrosine 219 is modified (phosphotyrosine). Phosphoserine is present on serine 234. Lysine 245 is covalently cross-linked (Glycyl lysine isopeptide (Lys-Gly) (interchain with G-Cter in SUMO2)). A Phosphoserine modification is found at serine 264. Lysine 269 participates in a covalent cross-link: Glycyl lysine isopeptide (Lys-Gly) (interchain with G-Cter in SUMO2). At serine 275 the chain carries Phosphoserine. Residues 342–394 (PFMLQQSTNPAPGILGPPPPSFHLGGPAVGPRGNLGAGNGNLQGPRHMQKGRV) are disordered. The RRM 1 domain occupies 398–473 (RVVHIMDFQR…KPVRVHLSQK (76 aa)). Glycyl lysine isopeptide (Lys-Gly) (interchain with G-Cter in SUMO2) cross-links involve residues lysine 478, lysine 487, and lysine 491. One can recognise an RRM 2 domain in the interval 496-571 (RVIHLSNLPH…RCVKVDLSEK (76 aa)). Phosphoserine occurs at positions 509 and 511. Residue lysine 515 forms a Glycyl lysine isopeptide (Lys-Gly) (interchain with G-Cter in SUMO2) linkage. Lysine 522 is modified (N6-acetyllysine; alternate). Residue lysine 522 forms a Glycyl lysine isopeptide (Lys-Gly) (interchain with G-Cter in SUMO2); alternate linkage. Serine 533 carries the phosphoserine modification. Residues lysine 554 and lysine 555 each participate in a glycyl lysine isopeptide (Lys-Gly) (interchain with G-Cter in SUMO2) cross-link. Position 571 is an N6-acetyllysine (lysine 571). The disordered stretch occupies residues 588–785 (KKDKSRKRSY…EYRIGPYQPN (198 aa)). A phosphoserine mark is found at serine 596, serine 598, serine 604, and serine 606. A compositionally biased stretch (basic and acidic residues) spans 600-643 (DGKESPSDKKSKTDGAQKTENPAEGKEQEEKSGEDGEKDTKDDQ). Glycyl lysine isopeptide (Lys-Gly) (interchain with G-Cter in SUMO2) cross-links involve residues lysine 617 and lysine 630. A compositionally biased stretch (acidic residues) spans 653 to 665 (ESEDELLVDEEEA). Phosphoserine occurs at positions 654, 671, 673, and 674. At threonine 679 the chain carries Phosphothreonine. Phosphoserine is present on serine 689. Basic and acidic residues predominate over residues 689–704 (SDGKKEPSDKAVKKDA). The Nuclear localization signal motif lies at 708–716 (SKKKLKKVD). Residues lysine 717 and lysine 734 each participate in a glycyl lysine isopeptide (Lys-Gly) (interchain with G-Cter in SUMO2) cross-link. The residue at position 739 (threonine 739) is a Phosphothreonine. A phosphoserine mark is found at serine 745, serine 757, and serine 760. Residues 765-778 (DENKEDYTIPDEYR) are compositionally biased toward basic and acidic residues. Lysine 768 participates in a covalent cross-link: Glycyl lysine isopeptide (Lys-Gly) (interchain with G-Cter in SUMO2). Residues 799–830 (FYCKLCSLFYTNEEVAKNTHCSSLPHYQKLKK) form a Matrin-type zinc finger. Lysine 834 is modified (N6-acetyllysine; alternate). Lysine 834 participates in a covalent cross-link: Glycyl lysine isopeptide (Lys-Gly) (interchain with G-Cter in SUMO2); alternate.

Part of a complex consisting of SFPQ, NONO and MATR3. Interacts with AGO1 and AGO2. Part of a complex composed at least of ASH2L, EMSY, HCFC1, HSPA8, CCAR2, MATR3, MKI67, RBBP5, TUBB2A, WDR5 and ZNF335; this complex may have a histone H3-specific methyltransferase activity. Interacts with TARDBP. Part of the HDP-RNP complex composed of at least HEXIM1, PRKDC, XRCC5, XRCC6, paraspeckle proteins (SFPQ, NONO, PSPC1, RBM14, and MATR3) and NEAT1 RNA. Interacts with FUS. Interacts with IGF2BP1. Interacts with IGF2BP2 and IGF2BP3. Interacts with RBPMS.

The protein resides in the nucleus matrix. In terms of biological role, may play a role in transcription or may interact with other nuclear matrix proteins to form the internal fibrogranular network. In association with the SFPQ-NONO heteromer may play a role in nuclear retention of defective RNAs. Plays a role in the regulation of DNA virus-mediated innate immune response by assembling into the HDP-RNP complex, a complex that serves as a platform for IRF3 phosphorylation and subsequent innate immune response activation through the cGAS-STING pathway. Binds to N6-methyladenosine (m6A)-containing mRNAs and contributes to MYC stability by binding to m6A-containing MYC mRNAs. May bind to specific miRNA hairpins. The chain is Matrin-3 (Matr3) from Rattus norvegicus (Rat).